Here is a 652-residue protein sequence, read N- to C-terminus: Forkhead box protein O1-A (652 aa).

Disordered stretches follow at residues 1–57 (MADA…EPSS), 208–277 (SSWW…NSHS), and 359–406 (NLLS…QQTQ). Over residues 41 to 57 (DSNTSSPAPSVKQEPSS) the composition is skewed to polar residues. Positions 134-228 (WGNMSYADLI…KSGKSPRRRA (95 aa)) form a DNA-binding region, fork-head. The span at 238 to 249 (AKSRGRAAKKKL) shows a compositional bias: basic residues. The segment covering 362–397 (SPKNPSTGGPGSGSNQSSPSSLMQASPGYSPYSSPG) has biased composition (low complexity).

The protein resides in the cytoplasm. It localises to the nucleus. Functionally, transcription factor that regulates metabolic homeostasis in response to oxidative stress. Binds to the consensus sequence 5'-TT[G/A]TTTTG-3' and the related Daf-16 family binding element (DBE) with consensus sequence 5'-TT[G/A]TTTAC-3'. Main regulator of redox balance and osteoblast numbers and controls bone mass. Orchestrates the endocrine function of the skeleton in regulating glucose metabolism. May be involved in regulating cellular homeostasis in the eye. May act as a positive regulator of apoptosis in cardiac smooth muscle cells as a result of its transcriptional activation of pro-apoptotic genes. In Danio rerio (Zebrafish), this protein is Forkhead box protein O1-A (foxo1a).